A 289-amino-acid polypeptide reads, in one-letter code: Digeranylgeranylglyceryl phosphate synthase (289 aa).

Transmembrane regions (helical) follow at residues 18-38, 47-67, 99-119, 120-140, 163-183, 218-238, 243-263, and 269-289; these read LMAGFAAAIGTLIAFNILISG, AFPFLDAGLVFLVVFLVSGAG, FYFSYLLFALGTLIAFSINSI, CGSIALFNSLLLILYAKTLKG, IFGFGGIKALSVLFLLAALAI, LAVLTGLLAVILSPLPYFMSV, YIYLVSLADLGFLAAIIQLLV, and KSSKLFKIAMFFALIAFIAGV.

It belongs to the UbiA prenyltransferase family. DGGGP synthase subfamily. The cofactor is Mg(2+).

It localises to the cell membrane. It catalyses the reaction sn-3-O-(geranylgeranyl)glycerol 1-phosphate + (2E,6E,10E)-geranylgeranyl diphosphate = 2,3-bis-O-(geranylgeranyl)-sn-glycerol 1-phosphate + diphosphate. It functions in the pathway membrane lipid metabolism; glycerophospholipid metabolism. Functionally, prenyltransferase that catalyzes the transfer of the geranylgeranyl moiety of geranylgeranyl diphosphate (GGPP) to the C2 hydroxyl of (S)-3-O-geranylgeranylglyceryl phosphate (GGGP). This reaction is the second ether-bond-formation step in the biosynthesis of archaeal membrane lipids. The protein is Digeranylgeranylglyceryl phosphate synthase of Methanosarcina mazei (strain ATCC BAA-159 / DSM 3647 / Goe1 / Go1 / JCM 11833 / OCM 88) (Methanosarcina frisia).